The primary structure comprises 226 residues: Lysosomal-associated transmembrane protein 4B (226 aa).

4 helical membrane passes run 26–46 (ILLG…LLSA), 72–92 (MCIA…ATYG), 100–120 (WIIP…LVAI), and 153–173 (CLVL…GYLI). The tract at residues 205-221 (PPYDDATVNGAAKEPPP) is required for NEDD4 interaction.

Belongs to the LAPTM4/LAPTM5 transporter family. As to quaternary structure, homooligomer; upon reaching the lysosomes. Interacts with MCOLN1. Interacts with NEDD4; may play a role in the lysosomal sorting of LAPTM4B; enhances HGS association with NEDD4; mediates inhibition of EGFR degradation. Interacts with PIP5K1C; promotes SNX5 association with LAPTM4B; kinase activity of PIP5K1C is required; interaction is regulated by phosphatidylinositol 4,5-bisphosphate generated by PIP5K1C. Interacts with HGS; promotes HGS ubiquitination. Interacts with SNX5. Interacts with SLC3A2 and SLC7A5; recruits SLC3A2 and SLC7A5 to lysosomes to promote leucine uptake into these organelles and is required for mTORC1 activation. Interacts with LRRC32; decreases TGFB1 production in regulatory T cells. Interacts with BECN1; competes with EGFR for LAPTM4B binding; regulates EGFR activity. Interacts with EGFR; positively correlates with EGFR activation. Post-translationally, undergoes proteolytic cleavage following delivery to the lysosomes. In terms of processing, ubiquitinated by NEDD4.

It is found in the endomembrane system. The protein localises to the late endosome membrane. Its subcellular location is the cell membrane. It localises to the cell projection. The protein resides in the lysosome membrane. It is found in the endosome membrane. The protein localises to the endosome. Its subcellular location is the multivesicular body membrane. It localises to the multivesicular body lumen. Functionally, required for optimal lysosomal function. Blocks EGF-stimulated EGFR intraluminal sorting and degradation. Conversely by binding with the phosphatidylinositol 4,5-bisphosphate, regulates its PIP5K1C interaction, inhibits HGS ubiquitination and relieves LAPTM4B inhibition of EGFR degradation. Recruits SLC3A2 and SLC7A5 (the Leu transporter) to the lysosome, promoting entry of leucine and other essential amino acid (EAA) into the lysosome, stimulating activation of proton-transporting vacuolar (V)-ATPase protein pump (V-ATPase) and hence mTORC1 activation. Plays a role as negative regulator of TGFB1 production in regulatory T cells. Binds ceramide and facilitates its exit from late endosome in order to control cell death pathways. This chain is Lysosomal-associated transmembrane protein 4B, found in Macaca fascicularis (Crab-eating macaque).